The sequence spans 532 residues: Small ribosomal subunit protein uS2cz (532 aa).

Residues 1 to 271 (METLEKNFKK…SPISSKEKKA (271 aa)) are N-terminal extension. TRAM domains lie at 38–97 (ALQA…SILN), 127–186 (DFKV…KPIL), and 197–260 (NQMI…KILK).

This sequence belongs to the universal ribosomal protein uS2 family.

It is found in the plastid. The protein localises to the chloroplast. The polypeptide is Small ribosomal subunit protein uS2cz (rps2-1) (Tetradesmus obliquus (Green alga)).